The primary structure comprises 471 residues: UDP-N-acetylmuramoylalanine--D-glutamate ligase (471 aa).

122 to 128 (GTNGKTT) is an ATP binding site.

This sequence belongs to the MurCDEF family.

Its subcellular location is the cytoplasm. It carries out the reaction UDP-N-acetyl-alpha-D-muramoyl-L-alanine + D-glutamate + ATP = UDP-N-acetyl-alpha-D-muramoyl-L-alanyl-D-glutamate + ADP + phosphate + H(+). It participates in cell wall biogenesis; peptidoglycan biosynthesis. In terms of biological role, cell wall formation. Catalyzes the addition of glutamate to the nucleotide precursor UDP-N-acetylmuramoyl-L-alanine (UMA). This Streptomyces coelicolor (strain ATCC BAA-471 / A3(2) / M145) protein is UDP-N-acetylmuramoylalanine--D-glutamate ligase.